A 467-amino-acid chain; its full sequence is ATP-dependent protease ATPase subunit HslU (467 aa).

Residues Val22 and 64–69 (GVGKTE) each bind ATP. Positions 146–185 (KASNNSNPLESLLGGAIPNFGNNDDEEEETPTEEIKTKRS) are disordered. The span at 168-177 (NDDEEEETPT) shows a compositional bias: acidic residues. Residues Asp280, Glu345, and Arg417 each coordinate ATP.

The protein belongs to the ClpX chaperone family. HslU subfamily. A double ring-shaped homohexamer of HslV is capped on each side by a ring-shaped HslU homohexamer. The assembly of the HslU/HslV complex is dependent on binding of ATP.

Its subcellular location is the cytoplasm. In terms of biological role, ATPase subunit of a proteasome-like degradation complex; this subunit has chaperone activity. The binding of ATP and its subsequent hydrolysis by HslU are essential for unfolding of protein substrates subsequently hydrolyzed by HslV. HslU recognizes the N-terminal part of its protein substrates and unfolds these before they are guided to HslV for hydrolysis. The chain is ATP-dependent protease ATPase subunit HslU from Staphylococcus haemolyticus (strain JCSC1435).